Consider the following 525-residue polypeptide: GMP synthase [glutamine-hydrolyzing] (525 aa).

In terms of domain architecture, Glutamine amidotransferase type-1 spans 13-202 (TILVLDFGSQ…AVDLCHAKQN (190 aa)). The active-site Nucleophile is cysteine 89. Residues histidine 176 and glutamate 178 contribute to the active site. The 198-residue stretch at 203–400 (WTMENFIDTE…LGIPHDLVWR (198 aa)) folds into the GMPS ATP-PPase domain. ATP is bound at residue 231–237 (SGGVDST). Lysine 241 is covalently cross-linked (Glycyl lysine isopeptide (Lys-Gly) (interchain with G-Cter in ubiquitin)). Arginine 304 is a binding site for XMP. A Glycyl lysine isopeptide (Lys-Gly) (interchain with G-Cter in ubiquitin) cross-link involves residue lysine 426. Residues aspartate 462, lysine 517, and glutamate 523 each coordinate XMP.

As to quaternary structure, homodimer. It depends on Mg(2+) as a cofactor.

Its subcellular location is the cytoplasm. The protein resides in the cytosol. The catalysed reaction is XMP + L-glutamine + ATP + H2O = GMP + L-glutamate + AMP + diphosphate + 2 H(+). Its pathway is purine metabolism; GMP biosynthesis; GMP from XMP (L-Gln route): step 1/1. Its function is as follows. Catalyzes the conversion of xanthine monophosphate (XMP) to GMP in the presence of glutamine and ATP through an adenyl-XMP intermediate. The chain is GMP synthase [glutamine-hydrolyzing] from Saccharomyces cerevisiae (strain ATCC 204508 / S288c) (Baker's yeast).